A 457-amino-acid chain; its full sequence is Dihydrolipoyl dehydrogenase (457 aa).

Residues 32–40 (EKQYFGGVC), Lys49, and Ala113 each bind FAD. The cysteines at positions 40 and 45 are disulfide-linked. NAD(+) contacts are provided by residues 178–182 (GGGVI), Val235, and 262–265 (SIGR). Residues Asp303 and Ala311 each contribute to the FAD site. The Proton acceptor role is filled by His437.

This sequence belongs to the class-I pyridine nucleotide-disulfide oxidoreductase family. In terms of assembly, homodimer. It depends on FAD as a cofactor.

It is found in the cytoplasm. It catalyses the reaction N(6)-[(R)-dihydrolipoyl]-L-lysyl-[protein] + NAD(+) = N(6)-[(R)-lipoyl]-L-lysyl-[protein] + NADH + H(+). Lipoamide dehydrogenase is a component of the alpha-ketoacid dehydrogenase complexes. The chain is Dihydrolipoyl dehydrogenase (pdhD) from Mycoplasma genitalium (strain ATCC 33530 / DSM 19775 / NCTC 10195 / G37) (Mycoplasmoides genitalium).